The following is a 144-amino-acid chain: Prefoldin subunit alpha (144 aa).

The protein belongs to the prefoldin alpha subunit family. Heterohexamer of two alpha and four beta subunits.

It localises to the cytoplasm. Its function is as follows. Molecular chaperone capable of stabilizing a range of proteins. Seems to fulfill an ATP-independent, HSP70-like function in archaeal de novo protein folding. This Methanococcus maripaludis (strain C7 / ATCC BAA-1331) protein is Prefoldin subunit alpha.